Reading from the N-terminus, the 206-residue chain is Large ribosomal subunit protein uL4 (206 aa).

The span at arginine 42–serine 54 shows a compositional bias: polar residues. Positions arginine 42–valine 93 are disordered. Residues phenylalanine 64 to serine 76 are compositionally biased toward basic residues.

The protein belongs to the universal ribosomal protein uL4 family. In terms of assembly, part of the 50S ribosomal subunit.

Functionally, one of the primary rRNA binding proteins, this protein initially binds near the 5'-end of the 23S rRNA. It is important during the early stages of 50S assembly. It makes multiple contacts with different domains of the 23S rRNA in the assembled 50S subunit and ribosome. In terms of biological role, forms part of the polypeptide exit tunnel. The chain is Large ribosomal subunit protein uL4 from Bartonella henselae (strain ATCC 49882 / DSM 28221 / CCUG 30454 / Houston 1) (Rochalimaea henselae).